We begin with the raw amino-acid sequence, 673 residues long: Probable multidrug resistance ABC transporter ATP-binding/permease protein YheH (673 aa).

The next 5 helical transmembrane spans lie at 18-38 (LITA…GPFI), 146-166 (IKGM…SVFF), 223-243 (LYVT…GIFT), 245-265 (LFLL…IIWL), and 347-367 (LAFV…AGIV). The ABC transmembrane type-1 domain maps to 18 to 398 (LITAVLLLTV…IVNQFSKLEL (381 aa)). Residues 430 to 664 (VEFRDVSFAY…EGQYYQMYEL (235 aa)) enclose the ABC transporter domain. Residue 463 to 470 (GHTGSGKS) participates in ATP binding.

Belongs to the ABC transporter superfamily. Heterodimer composed of YheH and YheI.

Its subcellular location is the cell membrane. Its activity is regulated as follows. Inhibited by ortho-vanadate. Its function is as follows. Involved in the transport of four structurally unrelated drugs, including doxorubicin and mitoxantrone. Transmembrane domains (TMD) form a pore in the membrane and the ATP-binding domain (NBD) is responsible for energy generation. This chain is Probable multidrug resistance ABC transporter ATP-binding/permease protein YheH (yheH), found in Bacillus subtilis (strain 168).